The following is a 325-amino-acid chain: UPF0285 protein MMP0642 (325 aa).

This sequence belongs to the UPF0285 family.

This chain is UPF0285 protein MMP0642, found in Methanococcus maripaludis (strain DSM 14266 / JCM 13030 / NBRC 101832 / S2 / LL).